A 319-amino-acid polypeptide reads, in one-letter code: Acetyl-coenzyme A carboxylase carboxyl transferase subunit alpha (319 aa).

The 262-residue stretch at 35 to 296 (DLDKEIKQLE…KQRLIEQLNE (262 aa)) folds into the CoA carboxyltransferase C-terminal domain.

This sequence belongs to the AccA family. As to quaternary structure, acetyl-CoA carboxylase is a heterohexamer composed of biotin carboxyl carrier protein (AccB), biotin carboxylase (AccC) and two subunits each of ACCase subunit alpha (AccA) and ACCase subunit beta (AccD).

It localises to the cytoplasm. It catalyses the reaction N(6)-carboxybiotinyl-L-lysyl-[protein] + acetyl-CoA = N(6)-biotinyl-L-lysyl-[protein] + malonyl-CoA. Its pathway is lipid metabolism; malonyl-CoA biosynthesis; malonyl-CoA from acetyl-CoA: step 1/1. Its function is as follows. Component of the acetyl coenzyme A carboxylase (ACC) complex. First, biotin carboxylase catalyzes the carboxylation of biotin on its carrier protein (BCCP) and then the CO(2) group is transferred by the carboxyltransferase to acetyl-CoA to form malonyl-CoA. This Aliivibrio salmonicida (strain LFI1238) (Vibrio salmonicida (strain LFI1238)) protein is Acetyl-coenzyme A carboxylase carboxyl transferase subunit alpha.